We begin with the raw amino-acid sequence, 421 residues long: Probable UDP-arabinose 4-epimerase 1 (421 aa).

The Cytoplasmic segment spans residues 1–33; sequence MLPTNRNRPQQRPARSWYFISDMDFSDPKRKPR. The helical; Signal-anchor for type II membrane protein transmembrane segment at 34 to 53 threads the bilayer; it reads YLSKILMVALLTAMCVVMLT. The Lumenal portion of the chain corresponds to 54-421; sequence QPPCHRRTPS…GYGPPQAMVL (368 aa). 74-105 contributes to the NAD(+) binding site; it reads HVLVTGGAGYIGSHAALRLLKDSFRVTIVDNL. The active-site Proton acceptor is the Y222.

The protein belongs to the NAD(P)-dependent epimerase/dehydratase family. The cofactor is NAD(+).

The protein resides in the golgi apparatus. It localises to the golgi stack membrane. It catalyses the reaction UDP-beta-L-arabinopyranose = UDP-alpha-D-xylose. It participates in nucleotide-sugar biosynthesis; UDP-L-arabinose biosynthesis; UDP-L-arabinose from UDP-alpha-D-xylose: step 1/1. Its pathway is cell wall biogenesis; cell wall polysaccharide biosynthesis. In Oryza sativa subsp. japonica (Rice), this protein is Probable UDP-arabinose 4-epimerase 1 (UEL-1).